The chain runs to 444 residues: L-cysteine:1D-myo-inositol 2-amino-2-deoxy-alpha-D-glucopyranoside ligase (444 aa).

Residues 1-13 (MPCDRKTSPDQHH) are compositionally biased toward basic and acidic residues. The disordered stretch occupies residues 1 to 21 (MPCDRKTSPDQHHALQIHRHH). Cys-75 contributes to the Zn(2+) binding site. L-cysteinyl-5'-AMP-binding positions include 75-78 (CGIT), Thr-90, and 113-115 (NIT). The 'HIGH' region motif lies at 77 to 87 (ITPYDATHLGH). Positions 219–224 (ERGGDP) match the 'ERGGDP' region motif. Residue Trp-259 coordinates L-cysteinyl-5'-AMP. Cys-263 is a binding site for Zn(2+). Residue 281–283 (GSD) participates in L-cysteinyl-5'-AMP binding. Zn(2+) is bound at residue His-288. An L-cysteinyl-5'-AMP-binding site is contributed by Ile-315. Positions 321–325 (KMSKS) match the 'KMSKS' region motif.

The protein belongs to the class-I aminoacyl-tRNA synthetase family. MshC subfamily. As to quaternary structure, monomer. Requires Zn(2+) as cofactor.

It catalyses the reaction 1D-myo-inositol 2-amino-2-deoxy-alpha-D-glucopyranoside + L-cysteine + ATP = 1D-myo-inositol 2-(L-cysteinylamino)-2-deoxy-alpha-D-glucopyranoside + AMP + diphosphate + H(+). In terms of biological role, catalyzes the ATP-dependent condensation of GlcN-Ins and L-cysteine to form L-Cys-GlcN-Ins. The chain is L-cysteine:1D-myo-inositol 2-amino-2-deoxy-alpha-D-glucopyranoside ligase from Mycolicibacterium gilvum (strain PYR-GCK) (Mycobacterium gilvum (strain PYR-GCK)).